The primary structure comprises 132 residues: D-ribose pyranase (132 aa).

The active-site Proton donor is the H20. Substrate is bound by residues D28, H99, and 121–123 (YSN).

The protein belongs to the RbsD / FucU family. RbsD subfamily. As to quaternary structure, homodecamer.

It localises to the cytoplasm. It catalyses the reaction beta-D-ribopyranose = beta-D-ribofuranose. It functions in the pathway carbohydrate metabolism; D-ribose degradation; D-ribose 5-phosphate from beta-D-ribopyranose: step 1/2. Catalyzes the interconversion of beta-pyran and beta-furan forms of D-ribose. The protein is D-ribose pyranase of Lactococcus lactis subsp. lactis (strain IL1403) (Streptococcus lactis).